Here is a 362-residue protein sequence, read N- to C-terminus: Alanine racemase (362 aa).

Lysine 35 serves as the catalytic Proton acceptor; specific for D-alanine. N6-(pyridoxal phosphate)lysine is present on lysine 35. Position 130 (arginine 130) interacts with substrate. The active-site Proton acceptor; specific for L-alanine is tyrosine 257. Methionine 305 serves as a coordination point for substrate.

This sequence belongs to the alanine racemase family. Pyridoxal 5'-phosphate is required as a cofactor.

The enzyme catalyses L-alanine = D-alanine. The protein operates within amino-acid biosynthesis; D-alanine biosynthesis; D-alanine from L-alanine: step 1/1. Functionally, catalyzes the interconversion of L-alanine and D-alanine. May also act on other amino acids. The chain is Alanine racemase (alr) from Nitrosomonas europaea (strain ATCC 19718 / CIP 103999 / KCTC 2705 / NBRC 14298).